The chain runs to 94 residues: Large ribosomal subunit protein bL28 (94 aa).

It belongs to the bacterial ribosomal protein bL28 family.

This is Large ribosomal subunit protein bL28 from Novosphingobium aromaticivorans (strain ATCC 700278 / DSM 12444 / CCUG 56034 / CIP 105152 / NBRC 16084 / F199).